Here is a 332-residue protein sequence, read N- to C-terminus: UDP-N-acetylenolpyruvoylglucosamine reductase (332 aa).

Residues Arg45–Leu243 enclose the FAD-binding PCMH-type domain. The active site involves Arg194. Ser250 serves as the catalytic Proton donor. Residue Glu320 is part of the active site.

This sequence belongs to the MurB family. FAD is required as a cofactor.

It localises to the cytoplasm. It carries out the reaction UDP-N-acetyl-alpha-D-muramate + NADP(+) = UDP-N-acetyl-3-O-(1-carboxyvinyl)-alpha-D-glucosamine + NADPH + H(+). The protein operates within cell wall biogenesis; peptidoglycan biosynthesis. Its function is as follows. Cell wall formation. The sequence is that of UDP-N-acetylenolpyruvoylglucosamine reductase from Nitrosomonas eutropha (strain DSM 101675 / C91 / Nm57).